A 218-amino-acid chain; its full sequence is Superoxide dismutase [Mn] 2, mitochondrial (218 aa).

The transit peptide at 1–24 directs the protein to the mitochondrion; it reads MLQSTARTASKLVQPVAGVLAVRS. The Mn(2+) site is built by H50, H98, D179, and H183.

Belongs to the iron/manganese superoxide dismutase family. Homotetramer. Mn(2+) is required as a cofactor. Expressed in pharynx and rectum. Upon thermal stress, expressed in vulva, body wall muscles and hypodermis.

The protein localises to the mitochondrion. It carries out the reaction 2 superoxide + 2 H(+) = H2O2 + O2. In terms of biological role, destroys superoxide anion radicals which are normally produced within the cells and which are toxic to biological systems. In Caenorhabditis elegans, this protein is Superoxide dismutase [Mn] 2, mitochondrial (sod-3).